The sequence spans 155 residues: uncharacterized protein (155 aa).

The N-acetyltransferase domain occupies 7-154 (LQINYKTLEE…VWLPESVELQ (148 aa)).

This is an uncharacterized protein from Brevibacillus brevis (strain 47 / JCM 6285 / NBRC 100599).